The primary structure comprises 760 residues: MMDQARSAFSNLFGGEPLSYTRFSLARQVDGDNSHVEMKLAVDEEENADNNTKANVTKPKRCGGSICYGTIAVIIFFLIGFMIGYLGYCKGVEPKTECERLAGTESPVREEPEEDFPAAPRLYWDDLKKKLSEKLDTTDFTSTIKLLNENSYVPREAGSQKDENLALYVENQFREFKLSKVWRDQHFVKIQVKDSAQNSVIIVDKNGRLVYLVENPGGYVAYSKAATVTGKLVHANFGTKKDFEDLDTPVNGSIVIVRAGKITFAEKVANAESLNAIGVLIYMDQTKFPIVNAELSFFGHAHLGTGDPYTPGFPSFNHTQFPPSRSSGLPNIPVQTISRAAAEKLFGNMEGDCPSDWKTDSTCRMVTSESKNVKLTVSNVLKEIKILNIFGVIKGFVEPDHYVVVGAQRDAWGPGAAKSGVGTALLLKLAEMFSDMVLKDGFQPSRSIIFASWSAGDFGSVGATEWLEGYLSSLHLKAFTYINLDKAVLGTSNFKVSASPLLYTLIEKTMQNVKHPVTGQSLYQDSNWASKVEKLTLDNAAFPFLAYSGIPAVSFCFCEDTDYPYLGTTMDTYKELTERIPELNKVARAAAEVAGQFMIKLTHDVELNLDYERYNSQLLSFVRDLNQYRADIKEMGLSLQWLYSARGDFFRATSRLTTDFGNAEKTDRFVMKKLNDRVMRVEYHFLSPYVSPKESPFRHVFWGSGSHTLSALLENLKLRKQNNSAFNETLFRNQLALATWTIQGAANALSGDVWDIDNEF.

Over 1–65 the chain is Cytoplasmic; that stretch reads MMDQARSAFS…VTKPKRCGGS (65 aa). The interval 1 to 67 is mediates interaction with SH3BP4; that stretch reads MMDQARSAFS…KPKRCGGSIC (67 aa). 2 positions are modified to phosphoserine: Ser-10 and Ser-19. The residue at position 20 (Tyr-20) is a Phosphotyrosine. Residues 20 to 23 carry the Endocytosis signal motif; sequence YTRF. At Thr-21 the chain carries Phosphothreonine. Ser-24 is subject to Phosphoserine. The short motif at 58–61 is the Stop-transfer sequence element; the sequence is KPKR. 2 S-palmitoyl cysteine lipidation sites follow: Cys-62 and Cys-67. A helical; Signal-anchor for type II membrane protein membrane pass occupies residues 66–86; that stretch reads ICYGTIAVIIFFLIGFMIGYL. Residues 87–760 lie on the Extracellular side of the membrane; that stretch reads GYCKGVEPKT…GDVWDIDNEF (674 aa). In terms of domain architecture, PA spans 223–313; sequence SKAATVTGKL…GTGDPYTPGF (91 aa). Residues Asn-251 and Asn-317 are each glycosylated (N-linked (GlcNAc...) asparagine). Positions 569–760 are ligand-binding; it reads TMDTYKELTE…GDVWDIDNEF (192 aa). The Cell attachment site motif lies at 646–648; the sequence is RGD. Residues Asn-722 and Asn-727 are each glycosylated (N-linked (GlcNAc...) asparagine).

It belongs to the peptidase M28 family. M28B subfamily. In terms of assembly, homodimer; disulfide-linked. Binds one transferrin or HFE molecule per subunit. Interacts with SH3BP4. Interacts with STEAP3; facilitates TFRC endocytosis in erythroid precursor cells. Stearoylated by ZDHHC6 which inhibits TFRC-mediated activation of the JNK pathway and promotes mitochondrial fragmentation. Stearoylation does not affect iron uptake.

It localises to the cell membrane. It is found in the melanosome. Cellular uptake of iron occurs via receptor-mediated endocytosis of ligand-occupied transferrin receptor into specialized endosomes. Endosomal acidification leads to iron release. The apotransferrin-receptor complex is then recycled to the cell surface with a return to neutral pH and the concomitant loss of affinity of apotransferrin for its receptor. Transferrin receptor is necessary for development of erythrocytes and the nervous system. Positively regulates T and B cell proliferation through iron uptake. Acts as a lipid sensor that regulates mitochondrial fusion by regulating activation of the JNK pathway. When dietary levels of stearate (C18:0) are low, promotes activation of the JNK pathway, resulting in HUWE1-mediated ubiquitination and subsequent degradation of the mitofusin MFN2 and inhibition of mitochondrial fusion. When dietary levels of stearate (C18:0) are high, TFRC stearoylation inhibits activation of the JNK pathway and thus degradation of the mitofusin MFN2. Mediates uptake of NICOL1 into fibroblasts where it may regulate extracellular matrix production. This chain is Transferrin receptor protein 1 (TFRC), found in Pongo abelii (Sumatran orangutan).